A 64-amino-acid polypeptide reads, in one-letter code: Conotoxin Ts-011 (64 aa).

An N-terminal signal peptide occupies residues 1-22; that stretch reads MHCLPVLVILLLLIASTPSVDA. Positions 23–52 are excised as a propeptide; that stretch reads RPKTKDDVPPASFHGADDANRILQTLWNLR. The residue at position 63 (I63) is an Isoleucine amide.

The protein belongs to the conotoxin T superfamily. In terms of processing, contains 2 disulfide bonds that can be either 'C1-C3, C2-C4' or 'C1-C4, C2-C3', since these disulfide connectivities have been observed for conotoxins with cysteine framework V (for examples, see AC P0DQQ7 and AC P81755). In terms of tissue distribution, expressed by the venom duct.

It localises to the secreted. This is Conotoxin Ts-011 from Conus tessulatus (Tessellate cone).